A 184-amino-acid chain; its full sequence is ATP-dependent protease subunit HslV (184 aa).

The active site involves Thr-11. Na(+) is bound by residues Ala-165, Cys-168, and Thr-171.

This sequence belongs to the peptidase T1B family. HslV subfamily. In terms of assembly, a double ring-shaped homohexamer of HslV is capped on each side by a ring-shaped HslU homohexamer. The assembly of the HslU/HslV complex is dependent on binding of ATP.

Its subcellular location is the cytoplasm. It catalyses the reaction ATP-dependent cleavage of peptide bonds with broad specificity.. With respect to regulation, allosterically activated by HslU binding. Functionally, protease subunit of a proteasome-like degradation complex believed to be a general protein degrading machinery. In Zymomonas mobilis subsp. mobilis (strain ATCC 31821 / ZM4 / CP4), this protein is ATP-dependent protease subunit HslV.